The primary structure comprises 239 residues: Ribonuclease HII (239 aa).

The RNase H type-2 domain maps to 18-231 (KIIVGLDEAG…SKNLLKEIEE (214 aa)). Positions 24, 25, and 125 each coordinate a divalent metal cation.

The protein belongs to the RNase HII family. It depends on Mn(2+) as a cofactor. The cofactor is Mg(2+).

The protein localises to the cytoplasm. It catalyses the reaction Endonucleolytic cleavage to 5'-phosphomonoester.. Functionally, endonuclease that specifically degrades the RNA of RNA-DNA hybrids. This is Ribonuclease HII from Methanococcus maripaludis (strain C6 / ATCC BAA-1332).